Reading from the N-terminus, the 170-residue chain is Cyclic pyranopterin monophosphate synthase (170 aa).

Substrate-binding positions include 75–77 and 113–114; these read LCH and ME. The active site involves Asp-128.

This sequence belongs to the MoaC family. As to quaternary structure, homohexamer; trimer of dimers.

It catalyses the reaction (8S)-3',8-cyclo-7,8-dihydroguanosine 5'-triphosphate = cyclic pyranopterin phosphate + diphosphate. It functions in the pathway cofactor biosynthesis; molybdopterin biosynthesis. In terms of biological role, catalyzes the conversion of (8S)-3',8-cyclo-7,8-dihydroguanosine 5'-triphosphate to cyclic pyranopterin monophosphate (cPMP). The protein is Cyclic pyranopterin monophosphate synthase of Pelotomaculum thermopropionicum (strain DSM 13744 / JCM 10971 / SI).